Consider the following 860-residue polypeptide: DNA mismatch repair protein MutS (860 aa).

Gly-625–Ser-632 provides a ligand contact to ATP.

It belongs to the DNA mismatch repair MutS family.

In terms of biological role, this protein is involved in the repair of mismatches in DNA. It is possible that it carries out the mismatch recognition step. This protein has a weak ATPase activity. In Aeromonas hydrophila subsp. hydrophila (strain ATCC 7966 / DSM 30187 / BCRC 13018 / CCUG 14551 / JCM 1027 / KCTC 2358 / NCIMB 9240 / NCTC 8049), this protein is DNA mismatch repair protein MutS.